We begin with the raw amino-acid sequence, 611 residues long: Protein ral2 (611 aa).

Kelch repeat units follow at residues 43–91 (EAFV…HSGD), 96–149 (KLIF…EVNG), and 175–224 (YLII…VINK). Ser-604 carries the post-translational modification Phosphoserine.

In terms of biological role, essential for mating and for recognition of the mating pheromone, and for the determination of cell shape. Implicated in activation of the ras1 protein. The chain is Protein ral2 (ral2) from Schizosaccharomyces pombe (strain 972 / ATCC 24843) (Fission yeast).